Consider the following 229-residue polypeptide: MAKTLARSTASRITKRLISTSGATTPSPSYILSRRSTPVFSHAVGFISSLNRFTTIRTRMDRSGGSYSPLKSGSNFSDRAPTEMAPLFPGCDYEHWLIVMDKPGGENATKQQMIDCYVQTLAKIIGSEEEAKKKIYNVSCERYFGFGCEIDEETSNKLEGLPGVLFILPDSYVDQENKDYGAELFVNGEIVQRPPERQRKIIELTTQRTNDKPKYHDKTRYVRRRENMR.

Residues 1–57 (MAKTLARSTASRITKRLISTSGATTPSPSYILSRRSTPVFSHAVGFISSLNRFTTIR) constitute a chloroplast and mitochondrion transit peptide.

Belongs to the MORF family. Homodimer and heterodimers with MORF8/RIP1, MORF3/RIP3, MORF6/RIP6, MORF7/RIP7 and MORF9/RIP9.

The protein localises to the mitochondrion. The protein resides in the plastid. It is found in the chloroplast. Functionally, involved in organellar RNA editing. Required for the processing of few RNA editing sites in mitochondria. This chain is Multiple organellar RNA editing factor 5, chloroplastic/mitochondrial, found in Arabidopsis thaliana (Mouse-ear cress).